The sequence spans 335 residues: Biotin synthase (335 aa).

The 230-residue stretch at 47-276 (FYGKKVKLNM…SKEIRISGGR (230 aa)) folds into the Radical SAM core domain. [4Fe-4S] cluster contacts are provided by cysteine 65, cysteine 69, and cysteine 72. 4 residues coordinate [2Fe-2S] cluster: cysteine 109, cysteine 141, cysteine 201, and arginine 271.

It belongs to the radical SAM superfamily. Biotin synthase family. Homodimer. It depends on [4Fe-4S] cluster as a cofactor. [2Fe-2S] cluster is required as a cofactor.

It catalyses the reaction (4R,5S)-dethiobiotin + (sulfur carrier)-SH + 2 reduced [2Fe-2S]-[ferredoxin] + 2 S-adenosyl-L-methionine = (sulfur carrier)-H + biotin + 2 5'-deoxyadenosine + 2 L-methionine + 2 oxidized [2Fe-2S]-[ferredoxin]. It functions in the pathway cofactor biosynthesis; biotin biosynthesis; biotin from 7,8-diaminononanoate: step 2/2. Functionally, catalyzes the conversion of dethiobiotin (DTB) to biotin by the insertion of a sulfur atom into dethiobiotin via a radical-based mechanism. The polypeptide is Biotin synthase (Bacillus subtilis subsp. natto).